We begin with the raw amino-acid sequence, 111 residues long: Latartoxin-2b (111 aa).

The N-terminal stretch at Met1 to Ser19 is a signal peptide. A propeptide spans Glu20–Arg43 (removed in mature form). The Processing quadruplet motif signature appears at Gly40 to Arg43. 5 disulfides stabilise this stretch: Cys45/Cys62, Cys52/Cys73, Cys61/Cys87, Cys75/Cys85, and Cys78/Cys99. The residue at position 110 (Val110) is a Valine amide.

This sequence belongs to the neurotoxin 19 (CSTX) family. 11 (latartoxin) subfamily. Contains 5 disulfide bonds. In terms of processing, cleavage of the propeptide depends on the processing quadruplet motif (XXXR, with at least one of X being E). Expressed by the venom gland.

Its subcellular location is the secreted. In terms of biological role, insect toxin. The polypeptide is Latartoxin-2b (Lachesana tarabaevi (Spider)).